The following is a 515-amino-acid chain: Probable cytosol aminopeptidase (515 aa).

2 residues coordinate Mn(2+): lysine 279 and aspartate 284. Residue lysine 291 is part of the active site. The Mn(2+) site is built by aspartate 302, aspartate 361, and glutamate 363. The active site involves arginine 365.

It belongs to the peptidase M17 family. Requires Mn(2+) as cofactor.

Its subcellular location is the cytoplasm. It catalyses the reaction Release of an N-terminal amino acid, Xaa-|-Yaa-, in which Xaa is preferably Leu, but may be other amino acids including Pro although not Arg or Lys, and Yaa may be Pro. Amino acid amides and methyl esters are also readily hydrolyzed, but rates on arylamides are exceedingly low.. The enzyme catalyses Release of an N-terminal amino acid, preferentially leucine, but not glutamic or aspartic acids.. Presumably involved in the processing and regular turnover of intracellular proteins. Catalyzes the removal of unsubstituted N-terminal amino acids from various peptides. The sequence is that of Probable cytosol aminopeptidase from Mycobacterium tuberculosis (strain ATCC 25177 / H37Ra).